The sequence spans 526 residues: Cytochrome P450 monooxygenase 58 (526 aa).

3 consecutive transmembrane segments (helical) span residues 13–33 (IASS…LLLI), 115–135 (FIMA…GYGK), and 306–326 (IGAG…AMTL). Position 451 (Cys-451) interacts with heme.

Belongs to the cytochrome P450 family. It depends on heme as a cofactor.

The protein resides in the membrane. Its pathway is secondary metabolite biosynthesis. Its function is as follows. Cytochrome P450 monooxygenase that is able to use delta(6)-protoilludene as a substrate to produce delta(6)-protoilludene-8-ol. In Postia placenta (strain ATCC 44394 / Madison 698-R) (Brown rot fungus), this protein is Cytochrome P450 monooxygenase 58.